We begin with the raw amino-acid sequence, 295 residues long: Ethanolamine ammonia-lyase small subunit (295 aa).

The adenosylcob(III)alamin site is built by Val-207, Glu-228, and Cys-258.

It belongs to the EutC family. In terms of assembly, the basic unit is a heterodimer which dimerizes to form tetramers. The heterotetramers trimerize; 6 large subunits form a core ring with 6 small subunits projecting outwards. The cofactor is adenosylcob(III)alamin.

It is found in the bacterial microcompartment. The catalysed reaction is ethanolamine = acetaldehyde + NH4(+). The protein operates within amine and polyamine degradation; ethanolamine degradation. Its function is as follows. Catalyzes the deamination of various vicinal amino-alcohols to oxo compounds. Allows this organism to utilize ethanolamine as the sole source of nitrogen and carbon in the presence of external vitamin B12. The protein is Ethanolamine ammonia-lyase small subunit of Escherichia coli (strain SE11).